We begin with the raw amino-acid sequence, 1093 residues long: Regulatory protein SWI4 (1093 aa).

The HTH APSES-type domain maps to 37–147; the sequence is IEIATYSETD…FQFDPNNPPP (111 aa). The H-T-H motif DNA-binding region spans 71–92; it reads ITQVFKIAQFSKTKRTKILEKE. The disordered stretch occupies residues 138–210; the sequence is FQFDPNNPPP…NQPNPSPLQN (73 aa). The span at 152 to 172 shows a compositional bias: polar residues; that stretch reads NSILRKTSPGTKITSPSSYNK. Over residues 179–201 the composition is skewed to low complexity; sequence SSSSTSATTTAANKKGKKNASIN. Serine 255 bears the Phosphoserine mark. Residues 448 to 457 show a composition bias toward low complexity; sequence NSMNMSSRSM. The segment at 448 to 468 is disordered; the sequence is NSMNMSSRSMTPFSAGNTSSQ. Residues 458–468 show a composition bias toward polar residues; that stretch reads TPFSAGNTSSQ. ANK repeat units lie at residues 520–549 and 641–670; these read QGHTPLHWATAMANIPLIKMLITLNANALQ and IGNTPLHLSALNLNFEVYNRLVYLGASTDI. Serine 806 is subject to Phosphoserine. Disordered stretches follow at residues 813–855 and 973–1017; these read RSQS…SSLL and QDEE…DAKF. The span at 818–837 shows a compositional bias: basic and acidic residues; the sequence is SDEKEKAKDNENQVEKKKDP. The span at 846 to 855 shows a compositional bias: low complexity; that stretch reads PSLESPSSLL. Residues 1000-1010 show a composition bias toward polar residues; it reads KSTSETSSPKN.

As to quaternary structure, component of the transcription complex SCB-binding factor (SBF) composed of SWI6 and SWI4. Interacts with MSA2.

Its function is as follows. Part of a complex involved in cell-cycle-dependent transcription. SWI4 and SWI6 are required for formation of the cell-cycle box factor-DNA complex. The repeated element in the upstream region of HO (5'-CACGAAAA-3') is called the cell cycle box (CCB). This Saccharomyces cerevisiae (strain ATCC 204508 / S288c) (Baker's yeast) protein is Regulatory protein SWI4 (SWI4).